The following is a 109-amino-acid chain: Large ribosomal subunit protein uL24 (109 aa).

Belongs to the universal ribosomal protein uL24 family. Part of the 50S ribosomal subunit.

Functionally, one of two assembly initiator proteins, it binds directly to the 5'-end of the 23S rRNA, where it nucleates assembly of the 50S subunit. One of the proteins that surrounds the polypeptide exit tunnel on the outside of the subunit. This Rickettsia akari (strain Hartford) protein is Large ribosomal subunit protein uL24.